A 262-amino-acid polypeptide reads, in one-letter code: TLC domain-containing protein 4-B (262 aa).

6 consecutive transmembrane segments (helical) span residues Pro-6–Gly-26, Thr-53–Asp-73, Leu-90–Trp-110, His-122–Gly-142, Gly-177–Gly-197, and Ala-218–Ala-238. One can recognise a TLC domain in the interval Arg-44–Tyr-246.

It belongs to the TLCD4 family.

It localises to the membrane. The sequence is that of TLC domain-containing protein 4-B (tlcd4-b) from Xenopus laevis (African clawed frog).